The chain runs to 662 residues: Chromosomal replication initiator protein DnaA (662 aa).

A domain I, interacts with DnaA modulators region spans residues 1–93 (MDDEQNVLAT…QVEGLGVRIA (93 aa)). The tract at residues 93–322 (AAPATPTAER…STPAPANSSA (230 aa)) is domain II. The span at 96–105 (ATPTAERAAA) shows a compositional bias: low complexity. The tract at residues 96 to 294 (ATPTAERAAA…SDGPVERDDE (199 aa)) is disordered. A compositionally biased stretch (basic and acidic residues) spans 114-123 (SRPERPRGER). Positions 166 to 199 (PPAAEYTPAAEYTPAAEYTPAAEYSPEPEYTPAT) are enriched in low complexity. Basic and acidic residues-rich tracts occupy residues 236–248 (TPRR…RRDA) and 261–290 (PGDR…GPVE). The segment at 323–539 (SLNAKYTFET…GALIRVTAFA (217 aa)) is domain III, AAA+ region. 4 residues coordinate ATP: Gly-367, Gly-369, Lys-370, and Thr-371. Positions 540 to 662 (SLNGQPLDLS…LTARIKQRSR (123 aa)) are domain IV, binds dsDNA.

Belongs to the DnaA family. In terms of assembly, oligomerizes as a right-handed, spiral filament on DNA at oriC.

It is found in the cytoplasm. Its function is as follows. Plays an essential role in the initiation and regulation of chromosomal replication. ATP-DnaA binds to the origin of replication (oriC) to initiate formation of the DNA replication initiation complex once per cell cycle. Binds the DnaA box (a 9 base pair repeat at the origin) and separates the double-stranded (ds)DNA. Forms a right-handed helical filament on oriC DNA; dsDNA binds to the exterior of the filament while single-stranded (ss)DNA is stabiized in the filament's interior. The ATP-DnaA-oriC complex binds and stabilizes one strand of the AT-rich DNA unwinding element (DUE), permitting loading of DNA polymerase. After initiation quickly degrades to an ADP-DnaA complex that is not apt for DNA replication. Binds acidic phospholipids. The chain is Chromosomal replication initiator protein DnaA from Nocardia farcinica (strain IFM 10152).